The chain runs to 481 residues: Alginate biosynthesis protein AlgA (481 aa).

This sequence belongs to the mannose-6-phosphate isomerase type 2 family. In terms of assembly, monomer. Co(2+) is required as a cofactor.

The enzyme catalyses D-mannose 6-phosphate = D-fructose 6-phosphate. The catalysed reaction is alpha-D-mannose 1-phosphate + GTP + H(+) = GDP-alpha-D-mannose + diphosphate. It participates in nucleotide-sugar biosynthesis; GDP-alpha-D-mannose biosynthesis; GDP-alpha-D-mannose from alpha-D-mannose 1-phosphate (GTP route): step 1/1. Its pathway is nucleotide-sugar biosynthesis; GDP-alpha-D-mannose biosynthesis; alpha-D-mannose 1-phosphate from D-fructose 6-phosphate: step 1/2. In terms of biological role, produces a precursor for alginate polymerization. The alginate layer provides a protective barrier against host immune defenses and antibiotics. This is Alginate biosynthesis protein AlgA (algA) from Pseudomonas aeruginosa (strain ATCC 15692 / DSM 22644 / CIP 104116 / JCM 14847 / LMG 12228 / 1C / PRS 101 / PAO1).